Here is a 317-residue protein sequence, read N- to C-terminus: Melanocyte-stimulating hormone receptor (317 aa).

At 1-37 (MAVQGFQRRLLGSLNSTPTAIPQLGLAANQTGARCLE) the chain is on the extracellular side. N29 carries an N-linked (GlcNAc...) asparagine glycan. Residues 38–63 (VSIPDGLFLSLGLVSLVENVLVVATI) form a helical membrane-spanning segment. Over 64–72 (AKNRNLHSP) the chain is Cytoplasmic. Residues 73–93 (TYCFICCLALSDLLVSGGNVL) form a helical membrane-spanning segment. At 94–118 (ETVVILLLEASALAARAAVVQPLDN) the chain is on the extracellular side. A helical transmembrane segment spans residues 119-140 (VIDVITCSSMVSSLCFLGAIAM). Topologically, residues 141–163 (DRYVSIFYALRYHSIVTLPRARQ) are cytoplasmic. A helical transmembrane segment spans residues 164–183 (AIAAIWVASVLFSTLFIAYY). Topologically, residues 184–191 (DHAAVLLC) are extracellular. A helical membrane pass occupies residues 192–211 (LVVFFLAMLVLMAVLYVHML). The Cytoplasmic portion of the chain corresponds to 212-240 (ARACQHAQGIARLHKRQRPLHQGFGLKGA). A helical transmembrane segment spans residues 241-266 (VTLTILLGIFFLCWGPFFLHLTLIVL). Residues 267 to 279 (CPQHPTCSCIFKN) lie on the Extracellular side of the membrane. The helical transmembrane segment at 280 to 300 (FNLFLTLIICNAIIDPLIYAF) threads the bilayer. Residues 301–317 (RRQELRRTLKEGLTCSW) are Cytoplasmic-facing. A lipid anchor (S-palmitoyl cysteine) is attached at C315.

This sequence belongs to the G-protein coupled receptor 1 family. Interacts with MGRN1, but does not undergo MGRN1-mediated ubiquitination; this interaction competes with GNAS-binding and thus inhibits agonist-induced cAMP production. Interacts with OPN3; the interaction results in a decrease in MC1R-mediated cAMP signaling and ultimately a decrease in melanin production in melanocytes.

Its subcellular location is the cell membrane. Functionally, receptor for MSH (alpha, beta and gamma) and ACTH. The activity of this receptor is mediated by G proteins which activate adenylate cyclase. Mediates melanogenesis, the production of eumelanin (black/brown) and phaeomelanin (red/yellow), via regulation of cAMP signaling in melanocytes. The polypeptide is Melanocyte-stimulating hormone receptor (MC1R) (Hylobates lar (Lar gibbon)).